The primary structure comprises 1560 residues: MDDEDGRCLLDVICDPQALNDFLHGSEKLDSDDLLDNPGEAQSAFYEGPGLHVQEASGNHLNPEPNQPAPSVDLDFLEDDILGSPATGGGGGGSGGADQPCDILQQSLQEANITEQTLEAEAELDLGPFQLPTLQPADGGAGPTGAGGAAAVAAGPQALFPGSTDLLGLQGPPTVLTHQALVPPQDVVNKALSVQPFLQPVGLGNVTLQPIPGLQGLPNGSPGGATAATLGLAPIQVVGQPVMALNTPTSQLLAKQVPVSGYLASAAGPSEPVTLASAGVSPQGAGLVIQKNLSAAVATTLNGNSVFGGAGAASAPTGTPSGQPLAVAPGLGSSPLVPAPNVILHRTPTPIQPKPAGVLPPKLYQLTPKPFAPAGATLTIQGEPGALPQQPKAPQNLTFMAAGKAGQNVVLSGFPAPALQANVFKQPPATTTGAAPPQPPGALSKPMSVHLLNQGSSIVIPAQHMLPGQNQFLLPGAPAVQLPQQLSALPANVGGQILAAAAPHTGGQLIANPILTNQNLAGPLSLGPVLAPHSGAHSAHILSAAPIQVGQPALFQMPVSLAAGSLPTQSQPAPAGPAATTVLQGVTLPPSAVAMLNTPDGLVQPATPAAATGEAAPVLTVQPAPQAPPAVSTPLPLGLQQPQAQQPPQAPTPQAAAPPQATTPQPSPGLASSPEKIVLGQPPSATPTAILTQDSLQMFLPQERSQQPLSAEGPHLSVPASVIVSAPPPAQDPAPATPVAKGAGLGPQAPDSQASPAPAPQIPAAAPLKGPGPSSSPSLPHQAPLGDSPHLPSPHPTRPPSRPPSRPQSVSRPPSEPPLHPCPPPQAPPTLPGIFVIQNQLGVPPPASNPAPTAPGPPQPPLRPQSQPPEGPLPPAPHLPPSSTSSAVASSSETSSRLPAPTPSDFQLQFPPSQGPHKSPTPPPTLHLVPEPAAPPPPPPRTFQMVTTPFPALPQPKALLERFHQVPSGIILQNKAGGAPAAPQTSTSLGPLTSPAASVLVSGQAPSGTPTAPSHAPAPAPMAATGLPPLLPAENKAFASNLPTLNVAKAASSGPGKPSGLQYESKLSGLKKPPTLQPSKEACFLEHLHKHQGSVLHPDYKTAFPSFEDALHRLLPYHVYQGALPSPSDYHKVDEEFETVSTQLLKRTQAMLNKYRLLLLEESRRVSPSAEMVMIDRMFIQEEKTTLALDKQLAKEKPDEYVSSSRSLGLPIAASSEGHRLPGHGPLSSSAPGASTQPPPHLPTKLVIRHGGAGGSPSVTWARASSSLSSSSSSSSAASSLDADEDGPMPSRNRPPIKTYEARSRIGLKLKIKQEAGLSKVVHNTALDPVHQPPPPPATLKVAEPPPRPPPPPPPTGQMNGTVDHPPPAAPERKPLGTAPHCPRLPLRKTYRENVGGPGAPEGTPAGRARGGSPAPLPAKVDEATSGLIRELAAVEDELYQRMLKGPPPEPAASAAQGTGDPDWEAPGLPPAKRRKSESPDVDQASFSSDSPQDDTLTEHLQSAIDSILNLQQAPGRTPAPSYPHAASAGTPASPPPLHRPEAYPPSSHNGGLGARTLTR.

Disordered regions lie at residues V53 to Q99, A624 to T688, I723 to P949, N974 to P1028, K1049 to T1075, and S1215 to Y1300. A compositionally biased stretch (gly residues) spans A86 to G96. A compositionally biased stretch (low complexity) spans A624–P664. The span at A726 to A736 shows a compositional bias: pro residues. The span at P747 to P780 shows a compositional bias: low complexity. Pro residues-rich tracts occupy residues L791–R806, P814–L831, and V843–P880. Positions P881–S896 are enriched in low complexity. S919 carries the phosphoserine modification. T921 bears the Phosphothreonine mark. Positions P932–R941 are enriched in pro residues. Residues A1005–P1028 are compositionally biased toward low complexity. N6-acetyllysine is present on K1057. Positions L1227 to T1236 are enriched in polar residues. Residues A1264–L1281 show a composition bias toward low complexity. K1313 participates in a covalent cross-link: Glycyl lysine isopeptide (Lys-Gly) (interchain with G-Cter in SUMO2). Disordered stretches follow at residues N1324–A1424 and Y1440–R1560. A compositionally biased stretch (pro residues) spans H1331 to T1356. Residues P1401–G1412 are compositionally biased toward low complexity. Position 1413 is a phosphoserine (S1413). The span at A1485–P1515 shows a compositional bias: polar residues.

Component of the multiprotein chromatin-remodeling complexes SWI/SNF: SWI/SNF-A (BAF), SWI/SNF-B (PBAF) and related complexes. The canonical complex contains a catalytic subunit (either SMARCA4/BRG1/BAF190A or SMARCA2/BRM/BAF190B) and at least SMARCE1, ACTL6A/BAF53, SMARCC1/BAF155, SMARCC2/BAF170, and SMARCB1/SNF5/BAF47. Other subunits specific to each of the complexes may also be present permitting several possible combinations developmentally and tissue specific. Component of the SWI/SNF (GBAF) subcomplex, which includes at least BICRA or BICRAL (mutually exclusive), BRD9, SS18, the core BAF subunits, SMARCA2/BRM, SMARCA4/BRG1/BAF190A, ACTL6A/BAF53, SMARCC1/BAF155, and SMARCD1/BAF60A. Interacts with BRD4; the interaction bridges BRD4 to the GBAF complex. As to expression, expressed at moderate levels in heart, brain, placenta, skeletal muscle, and pancreas, and at lower levels in lung, liver and kidney.

It is found in the nucleus. Component of SWI/SNF chromatin remodeling subcomplex GBAF that carries out key enzymatic activities, changing chromatin structure by altering DNA-histone contacts within a nucleosome in an ATP-dependent manner. May play a role in BRD4-mediated gene transcription. This Homo sapiens (Human) protein is BRD4-interacting chromatin-remodeling complex-associated protein.